The primary structure comprises 161 residues: 6,7-dimethyl-8-ribityllumazine synthase (161 aa).

Residues tryptophan 31, 63–65 (SFE), and 85–87 (VVI) each bind 5-amino-6-(D-ribitylamino)uracil. Residue 90–91 (GT) participates in (2S)-2-hydroxy-3-oxobutyl phosphate binding. The active-site Proton donor is the histidine 93. Phenylalanine 118 lines the 5-amino-6-(D-ribitylamino)uracil pocket. (2S)-2-hydroxy-3-oxobutyl phosphate is bound at residue arginine 132.

The protein belongs to the DMRL synthase family.

It carries out the reaction (2S)-2-hydroxy-3-oxobutyl phosphate + 5-amino-6-(D-ribitylamino)uracil = 6,7-dimethyl-8-(1-D-ribityl)lumazine + phosphate + 2 H2O + H(+). It functions in the pathway cofactor biosynthesis; riboflavin biosynthesis; riboflavin from 2-hydroxy-3-oxobutyl phosphate and 5-amino-6-(D-ribitylamino)uracil: step 1/2. Functionally, catalyzes the formation of 6,7-dimethyl-8-ribityllumazine by condensation of 5-amino-6-(D-ribitylamino)uracil with 3,4-dihydroxy-2-butanone 4-phosphate. This is the penultimate step in the biosynthesis of riboflavin. The chain is 6,7-dimethyl-8-ribityllumazine synthase from Pseudarthrobacter chlorophenolicus (strain ATCC 700700 / DSM 12829 / CIP 107037 / JCM 12360 / KCTC 9906 / NCIMB 13794 / A6) (Arthrobacter chlorophenolicus).